The chain runs to 505 residues: Protein nucleotidyltransferase YdiU (505 aa).

Positions 102, 104, 105, 125, 137, 138, 188, and 195 each coordinate ATP. The Proton acceptor role is filled by D264. 2 residues coordinate Mg(2+): N265 and D274. D274 is a binding site for ATP.

Belongs to the SELO family. It depends on Mg(2+) as a cofactor. Mn(2+) serves as cofactor.

It carries out the reaction L-seryl-[protein] + ATP = 3-O-(5'-adenylyl)-L-seryl-[protein] + diphosphate. It catalyses the reaction L-threonyl-[protein] + ATP = 3-O-(5'-adenylyl)-L-threonyl-[protein] + diphosphate. The catalysed reaction is L-tyrosyl-[protein] + ATP = O-(5'-adenylyl)-L-tyrosyl-[protein] + diphosphate. The enzyme catalyses L-histidyl-[protein] + UTP = N(tele)-(5'-uridylyl)-L-histidyl-[protein] + diphosphate. It carries out the reaction L-seryl-[protein] + UTP = O-(5'-uridylyl)-L-seryl-[protein] + diphosphate. It catalyses the reaction L-tyrosyl-[protein] + UTP = O-(5'-uridylyl)-L-tyrosyl-[protein] + diphosphate. In terms of biological role, nucleotidyltransferase involved in the post-translational modification of proteins. It can catalyze the addition of adenosine monophosphate (AMP) or uridine monophosphate (UMP) to a protein, resulting in modifications known as AMPylation and UMPylation. The protein is Protein nucleotidyltransferase YdiU of Nitrobacter winogradskyi (strain ATCC 25391 / DSM 10237 / CIP 104748 / NCIMB 11846 / Nb-255).